A 142-amino-acid chain; its full sequence is HTH-type transcriptional regulator LysM (142 aa).

An HTH asnC-type domain is found at Ile6–Val69. Positions Tyr25 to Glu44 form a DNA-binding region, H-T-H motif.

As to quaternary structure, homotetramer.

Its subcellular location is the cytoplasm. It participates in amino-acid biosynthesis; L-lysine biosynthesis via AAA pathway [regulation]. In the absence or at low concentrations of lysine, activates the biosynthesis of this amino acid via the alpha-aminoadipate (AAA) pathway. The protein is HTH-type transcriptional regulator LysM (lysM) of Saccharolobus solfataricus (strain ATCC 35092 / DSM 1617 / JCM 11322 / P2) (Sulfolobus solfataricus).